A 169-amino-acid chain; its full sequence is Photosystem I assembly protein Ycf3 (169 aa).

3 TPR repeats span residues 35-68 (AFSY…EIDP), 72-105 (SYIL…NPAL), and 120-153 (GEQA…APSN).

Belongs to the Ycf3 family.

The protein resides in the plastid. The protein localises to the chloroplast thylakoid membrane. Its function is as follows. Essential for the assembly of the photosystem I (PSI) complex. May act as a chaperone-like factor to guide the assembly of the PSI subunits. This is Photosystem I assembly protein Ycf3 from Chaetosphaeridium globosum (Charophycean green alga).